Reading from the N-terminus, the 558-residue chain is Potassium-transporting ATPase potassium-binding subunit 2 (558 aa).

Helical transmembrane passes span 1-21 (MSIVLFLIVFILLSLIVSRYL), 60-80 (IKHFLLFNGLMGGLSFVLLLI), 129-149 (VITFLMFTSAASGYAVCIAML), 169-189 (FIVRVLIPFALIISLFLISQG), 246-266 (WSNYAEALSMMLIPGSLVFLF), 281-301 (IMIFVAMFVMFIGFLVTCLYF), 326-346 (FGIGLSALFTTITTAFTTGTV), 353-373 (LTPLGGMVPMVLMMLNAVFGG), 376-396 (VGLMNMLIYVMLTVFICSLMI), 415-435 (IALSFLVHPLLILVFSALAFI), 485-505 (IVMLLARYIPIVLQILIVSSL), and 523-543 (LFFSSVLIIFIILLSGLTFLP).

It belongs to the KdpA family. As to quaternary structure, the system is composed of three essential subunits: KdpA, KdpB and KdpC.

Its subcellular location is the cell membrane. In terms of biological role, part of the high-affinity ATP-driven potassium transport (or Kdp) system, which catalyzes the hydrolysis of ATP coupled with the electrogenic transport of potassium into the cytoplasm. This subunit binds the extracellular potassium ions and delivers the ions to the membrane domain of KdpB through an intramembrane tunnel. The chain is Potassium-transporting ATPase potassium-binding subunit 2 from Staphylococcus aureus (strain Mu50 / ATCC 700699).